The following is a 387-amino-acid chain: Formate-dependent phosphoribosylglycinamide formyltransferase (387 aa).

Residues 12–13 (EL) and Glu72 contribute to the N(1)-(5-phospho-beta-D-ribosyl)glycinamide site. Residues Arg104, Lys145, 150–155 (SSGKGQ), 185–188 (EEFI), and Glu193 contribute to the ATP site. The ATP-grasp domain maps to 109–300 (DLAAKDLKLL…EFELHLRAIL (192 aa)). Positions 258 and 270 each coordinate Mg(2+). Residues Asp277, Lys348, and 355–356 (RR) contribute to the N(1)-(5-phospho-beta-D-ribosyl)glycinamide site.

It belongs to the PurK/PurT family. In terms of assembly, homodimer.

It carries out the reaction N(1)-(5-phospho-beta-D-ribosyl)glycinamide + formate + ATP = N(2)-formyl-N(1)-(5-phospho-beta-D-ribosyl)glycinamide + ADP + phosphate + H(+). It functions in the pathway purine metabolism; IMP biosynthesis via de novo pathway; N(2)-formyl-N(1)-(5-phospho-D-ribosyl)glycinamide from N(1)-(5-phospho-D-ribosyl)glycinamide (formate route): step 1/1. Involved in the de novo purine biosynthesis. Catalyzes the transfer of formate to 5-phospho-ribosyl-glycinamide (GAR), producing 5-phospho-ribosyl-N-formylglycinamide (FGAR). Formate is provided by PurU via hydrolysis of 10-formyl-tetrahydrofolate. The sequence is that of Formate-dependent phosphoribosylglycinamide formyltransferase from Leptospira interrogans serogroup Icterohaemorrhagiae serovar copenhageni (strain Fiocruz L1-130).